Here is a 475-residue protein sequence, read N- to C-terminus: MTVSVEELKVLLPELAGRVLVAGAGVSGVGITQLLREMGCAVTVADSNSAQLDKLAQQTGCQTISPADVVSDGFQDYTVVVTSPGWRPDSPLLVAAQSAGLEVIGDVELVYRLDRAEVFGPKRTWMVVTGTNGKTTTTAMLAEIMQHSGARAAAVGNIGVSVADAVRTQPRIDVLVAELSSFQLHWSSTLVPDVGILLNLADDHIDWHGSFAQYAQDKAKVLAAPTAIAGFDNGHVMTETTRIQRAEDADPIIGFTLGEPAKGMVGVRDGQLIDCAFGDNVVLRSAEGIEPAGPAGLNDALAAAAAARSMGVSAVCIEEALSKFEVAGHRGQCVGRHREVVAIDNSKATNPHAADSALAGFSSVVWVAGGQLKGAEIDELIVRHAGRIKAVALLGVDRDVIEDSVRTHIPGIPVLSVSETDPRRAMDEAVAWSVSQAEAGDAIVLAPAAASLDMYTGMGQRGDMFATAIAQHLHD.

An ATP-binding site is contributed by 130 to 136 (GTNGKTT).

Belongs to the MurCDEF family.

Its subcellular location is the cytoplasm. The enzyme catalyses UDP-N-acetyl-alpha-D-muramoyl-L-alanine + D-glutamate + ATP = UDP-N-acetyl-alpha-D-muramoyl-L-alanyl-D-glutamate + ADP + phosphate + H(+). Its pathway is cell wall biogenesis; peptidoglycan biosynthesis. In terms of biological role, cell wall formation. Catalyzes the addition of glutamate to the nucleotide precursor UDP-N-acetylmuramoyl-L-alanine (UMA). This is UDP-N-acetylmuramoylalanine--D-glutamate ligase from Corynebacterium diphtheriae (strain ATCC 700971 / NCTC 13129 / Biotype gravis).